Consider the following 279-residue polypeptide: Small ribosomal subunit protein uS3 (279 aa).

Residues 17–86 (VDEYFLEKLE…NPQIDVQEVK (70 aa)) enclose the KH type-2 domain. Low complexity-rich tracts occupy residues 206–233 (AEKKSPAAGAEPAKEAAAVPAPAESTAA) and 241–252 (ESEAAEAVTPEG). Residues 206 to 279 (AEKKSPAAGA…VVKTDGDSQS (74 aa)) are disordered.

This sequence belongs to the universal ribosomal protein uS3 family. In terms of assembly, part of the 30S ribosomal subunit.

Functionally, binds the lower part of the 30S subunit head. This is Small ribosomal subunit protein uS3 from Methanocella arvoryzae (strain DSM 22066 / NBRC 105507 / MRE50).